Here is a 364-residue protein sequence, read N- to C-terminus: Nucleoside ABC transporter permease protein NupB (364 aa).

Transmembrane regions (helical) follow at residues 9 to 29 (LVPL…MLAF), 77 to 99 (FNIG…ALSF), 105 to 125 (LLMI…MGFI), 138 to 158 (VITT…MIHS), 195 to 215 (TLNI…IIFT), 244 to 264 (LILS…VYGF), 284 to 304 (MAVA…ALLF), and 326 to 346 (VVTA…VMLP).

Belongs to the binding-protein-dependent transport system permease family. As to quaternary structure, the complex is composed of two ATP-binding proteins (NupA), two transmembrane proteins (NupB and NupC) and a solute-binding protein (BmpA).

The protein resides in the cell membrane. Its function is as follows. Part of an ABC transporter complex involved in the uptake of all common nucleosides. Responsible for the translocation of the substrate across the membrane. In Lactococcus lactis subsp. cremoris (strain MG1363), this protein is Nucleoside ABC transporter permease protein NupB.